The following is a 445-amino-acid chain: MTRNGLSHAQDDLWPAPFRHGSPVSGTVAVPGSKSLTNRYLVLAALASEPSLVRRPLHSRDSALMVAALQTLGAAVTPLPDPGPFGPDLRIDPVRRSAPAADPVRIDCGLAGTVMRFVPPLAALHTGQVDFDGDDAARVRPMGPVLDGLRQLGVHVVDQGRAALPFRVLGTGSVPGGTVTIDASGSSQFVSALLLAAVRFDSPLVLRHDAPGGVPSLPHVEMTLQVLRDAGVDARRVDERSWRVVPGDVAGLDVTVEPDLSNAGPFLAAAVATGGTVSIPDWPQHTTQGGDHWRHILPRFGADVTLREGVFTVTGPRELRGVDLDLSEAGELAPTVAALCALASGPSRLRGIAHLRGHETDRLAALSTELNGLGGAVTETLDGLAIEPTALHGGVFHTYQDHRMATAGAILGLRVPGVQVADIATTAKTLPEFPRMWAELVGSEG.

Residues Lys34, Ser35, and Arg39 each coordinate 3-phosphoshikimate. A phosphoenolpyruvate-binding site is contributed by Lys34. Phosphoenolpyruvate is bound by residues Gly112 and Arg140. Positions 186, 187, 188, 216, 331, and 358 each coordinate 3-phosphoshikimate. Gln188 is a phosphoenolpyruvate binding site. The active-site Proton acceptor is the Glu331. Phosphoenolpyruvate contacts are provided by Arg362, Arg403, and Lys428.

Belongs to the EPSP synthase family. As to quaternary structure, monomer.

The protein localises to the cytoplasm. The catalysed reaction is 3-phosphoshikimate + phosphoenolpyruvate = 5-O-(1-carboxyvinyl)-3-phosphoshikimate + phosphate. The protein operates within metabolic intermediate biosynthesis; chorismate biosynthesis; chorismate from D-erythrose 4-phosphate and phosphoenolpyruvate: step 6/7. In terms of biological role, catalyzes the transfer of the enolpyruvyl moiety of phosphoenolpyruvate (PEP) to the 5-hydroxyl of shikimate-3-phosphate (S3P) to produce enolpyruvyl shikimate-3-phosphate and inorganic phosphate. The polypeptide is 3-phosphoshikimate 1-carboxyvinyltransferase (Kocuria rhizophila (strain ATCC 9341 / DSM 348 / NBRC 103217 / DC2201)).